A 194-amino-acid polypeptide reads, in one-letter code: Histone H1.0-A (194 aa).

Disordered stretches follow at residues 1-29 and 96-194; these read MTENSAPAAKPRRSKASKKSTDHPKYSDM and ADEV…GRKK. Residues 22 to 95 form the H15 domain; the sequence is DHPKYSDMIL…GASGSFRLAK (74 aa). 2 stretches are compositionally biased toward basic residues: residues 102-164 and 172-194; these read PAKK…KTVR and KAKKAKPSKPKAKASPKKSGRKK.

Belongs to the histone H1/H5 family.

Its subcellular location is the nucleus. It is found in the chromosome. Functionally, histones H1 are necessary for the condensation of nucleosome chains into higher-order structures. The histones H1.0 are found in cells that are in terminal stages of differentiation or that have low rates of cell division. In Xenopus laevis (African clawed frog), this protein is Histone H1.0-A (h1-0-a).